Reading from the N-terminus, the 332-residue chain is L-lactate dehydrogenase A chain (332 aa).

Ala2 is subject to N-acetylalanine. Lys5 is subject to N6-acetyllysine; alternate. Residue Lys5 is modified to N6-succinyllysine; alternate. At Lys14 the chain carries N6-acetyllysine. Thr18 is subject to Phosphothreonine. Residue 29–57 (GAVGMACAISILMKDLADELALVDVIEDK) participates in NAD(+) binding. At Lys57 the chain carries N6-acetyllysine; alternate. Residue Lys57 forms a Glycyl lysine isopeptide (Lys-Gly) (interchain with G-Cter in SUMO2); alternate linkage. Lys81 carries the post-translational modification N6-acetyllysine. NAD(+) is bound at residue Arg99. A substrate-binding site is contributed by Arg106. Lys118 carries the N6-acetyllysine; alternate modification. At Lys118 the chain carries N6-succinyllysine; alternate. At Lys126 the chain carries N6-acetyllysine. Substrate-binding residues include Asn138 and Arg169. Catalysis depends on His193, which acts as the Proton acceptor. N6-acetyllysine occurs at positions 224 and 232. At Tyr239 the chain carries Phosphotyrosine. Lys243 is subject to N6-acetyllysine. Substrate is bound at residue Thr248. Position 309 is a phosphothreonine (Thr309). Position 310 is a phosphoserine (Ser310). An N6-acetyllysine; alternate modification is found at Lys318. Lys318 is modified (N6-succinyllysine; alternate). Phosphothreonine is present on Thr322.

Belongs to the LDH/MDH superfamily. LDH family. Homotetramer. Interacts with PTEN upstream reading frame protein MP31. ISGylated.

The protein resides in the cytoplasm. It catalyses the reaction (S)-lactate + NAD(+) = pyruvate + NADH + H(+). The protein operates within fermentation; pyruvate fermentation to lactate; (S)-lactate from pyruvate: step 1/1. Functionally, interconverts simultaneously and stereospecifically pyruvate and lactate with concomitant interconversion of NADH and NAD(+). The chain is L-lactate dehydrogenase A chain (LDHA) from Pan troglodytes (Chimpanzee).